Reading from the N-terminus, the 351-residue chain is Holliday junction branch migration complex subunit RuvB (351 aa).

Residues 4–199 form a large ATPase domain (RuvB-L) region; the sequence is DNPQFNQWYE…FGIINSLQYY (196 aa). Residues L38, R39, G80, K83, T84, T85, 146–148, R189, Y199, and R236 each bind ATP; that span reads EDY. T84 is a Mg(2+) binding site. A small ATPAse domain (RuvB-S) region spans residues 200-270; it reads TPEELQQIVV…IVTIGLDKLR (71 aa). The segment at 273-351 is head domain (RuvB-H); it reads NRGLDETDHK…HLGHAYQRKL (79 aa). Positions 328 and 333 each coordinate DNA.

The protein belongs to the RuvB family. In terms of assembly, homohexamer. Forms an RuvA(8)-RuvB(12)-Holliday junction (HJ) complex. HJ DNA is sandwiched between 2 RuvA tetramers; dsDNA enters through RuvA and exits via RuvB. An RuvB hexamer assembles on each DNA strand where it exits the tetramer. Each RuvB hexamer is contacted by two RuvA subunits (via domain III) on 2 adjacent RuvB subunits; this complex drives branch migration. In the full resolvosome a probable DNA-RuvA(4)-RuvB(12)-RuvC(2) complex forms which resolves the HJ.

It is found in the cytoplasm. The catalysed reaction is ATP + H2O = ADP + phosphate + H(+). In terms of biological role, the RuvA-RuvB-RuvC complex processes Holliday junction (HJ) DNA during genetic recombination and DNA repair, while the RuvA-RuvB complex plays an important role in the rescue of blocked DNA replication forks via replication fork reversal (RFR). RuvA specifically binds to HJ cruciform DNA, conferring on it an open structure. The RuvB hexamer acts as an ATP-dependent pump, pulling dsDNA into and through the RuvAB complex. RuvB forms 2 homohexamers on either side of HJ DNA bound by 1 or 2 RuvA tetramers; 4 subunits per hexamer contact DNA at a time. Coordinated motions by a converter formed by DNA-disengaged RuvB subunits stimulates ATP hydrolysis and nucleotide exchange. Immobilization of the converter enables RuvB to convert the ATP-contained energy into a lever motion, pulling 2 nucleotides of DNA out of the RuvA tetramer per ATP hydrolyzed, thus driving DNA branch migration. The RuvB motors rotate together with the DNA substrate, which together with the progressing nucleotide cycle form the mechanistic basis for DNA recombination by continuous HJ branch migration. Branch migration allows RuvC to scan DNA until it finds its consensus sequence, where it cleaves and resolves cruciform DNA. In Leuconostoc mesenteroides subsp. mesenteroides (strain ATCC 8293 / DSM 20343 / BCRC 11652 / CCM 1803 / JCM 6124 / NCDO 523 / NBRC 100496 / NCIMB 8023 / NCTC 12954 / NRRL B-1118 / 37Y), this protein is Holliday junction branch migration complex subunit RuvB.